Reading from the N-terminus, the 498-residue chain is MEFSIKSGSPEKQRSACVVVGVFESRKMTLPAELLDKASGGYISDIVRRGDMEGKAGSTLLLHSVPSTLCDRILLVGLGKEKDFREKEFASAIRTAVKVLNETGAFDASIFLTELPVRKRSIAWRVRQTAMIALDATYKFDQFKSKKEEIRRPLRKLTISVERRNELAPAEEALAQGLAIAEGMAMAKTLGNLPPNICHPTYLAEQAQAMAEEFKLGCEILDRAEMEKLGMHSLLSVARGSHQPPKLIVLTYKGARASEKPIVLVGKGVTFDTGGISLKPGAEMDEMKYDMCGAASVLGTMQAVARMALPINLTVVVPATENMPGGNATRPGDIVTSMSGQTIEILNTDAEGRLILCDALTYAERFEPDTVIDVATLTGACVVALGSIATGLFANKDALARDLLDAGEDANDRGWHMPLWDDYQELLKSPFADMANIGGRWGGAISAACFLSRFTKKFDWAHLDIAGTAWKSGADKGATGRPVPMLAYYLLQRAGKLN.

2 residues coordinate Mn(2+): K267 and D272. The active site involves K279. Positions 290, 349, and 351 each coordinate Mn(2+). R353 is a catalytic residue.

This sequence belongs to the peptidase M17 family. Mn(2+) serves as cofactor.

It localises to the cytoplasm. The catalysed reaction is Release of an N-terminal amino acid, Xaa-|-Yaa-, in which Xaa is preferably Leu, but may be other amino acids including Pro although not Arg or Lys, and Yaa may be Pro. Amino acid amides and methyl esters are also readily hydrolyzed, but rates on arylamides are exceedingly low.. It carries out the reaction Release of an N-terminal amino acid, preferentially leucine, but not glutamic or aspartic acids.. In terms of biological role, presumably involved in the processing and regular turnover of intracellular proteins. Catalyzes the removal of unsubstituted N-terminal amino acids from various peptides. The chain is Probable cytosol aminopeptidase from Dechloromonas aromatica (strain RCB).